The sequence spans 177 residues: ATP-dependent protease subunit HslV (177 aa).

The active site involves Thr-6. Ala-162, Cys-165, and Thr-168 together coordinate Na(+).

This sequence belongs to the peptidase T1B family. HslV subfamily. In terms of assembly, a double ring-shaped homohexamer of HslV is capped on each side by a ring-shaped HslU homohexamer. The assembly of the HslU/HslV complex is dependent on binding of ATP.

The protein localises to the cytoplasm. The catalysed reaction is ATP-dependent cleavage of peptide bonds with broad specificity.. With respect to regulation, allosterically activated by HslU binding. In terms of biological role, protease subunit of a proteasome-like degradation complex believed to be a general protein degrading machinery. The sequence is that of ATP-dependent protease subunit HslV from Desulfovibrio desulfuricans (strain ATCC 27774 / DSM 6949 / MB).